We begin with the raw amino-acid sequence, 331 residues long: Protoheme IX farnesyltransferase (331 aa).

A run of 8 helical transmembrane segments spans residues Leu-63 to Leu-83, Ser-109 to Val-129, Leu-132 to Leu-152, Ile-160 to Gly-180, Trp-188 to Leu-208, Val-215 to Val-235, Val-241 to Leu-261, and Ile-294 to Val-314.

Belongs to the UbiA prenyltransferase family. Protoheme IX farnesyltransferase subfamily.

It localises to the cell inner membrane. It carries out the reaction heme b + (2E,6E)-farnesyl diphosphate + H2O = Fe(II)-heme o + diphosphate. It participates in porphyrin-containing compound metabolism; heme O biosynthesis; heme O from protoheme: step 1/1. Its function is as follows. Converts heme B (protoheme IX) to heme O by substitution of the vinyl group on carbon 2 of heme B porphyrin ring with a hydroxyethyl farnesyl side group. The chain is Protoheme IX farnesyltransferase from Prochlorococcus marinus (strain NATL2A).